The chain runs to 1178 residues: Mitosis inhibitor protein kinase SWE1 (1178 aa).

Polar residues predominate over residues 1 to 35; that stretch reads MDSNPCQDVSGDTSSTPMANNNPTNDSTISSQNHS. Disordered stretches follow at residues 1-61, 188-209, 288-336, 378-434, 451-473, 524-543, 584-606, and 721-754; these read MDSN…HSQQ, NSQI…SSSM, SNNQ…SKGF, PTHT…SSNI, NHAR…TNIS, KNSI…PIKR, QRFP…QHHD, and KREI…GDDP. Residues 37–55 show a composition bias toward basic residues; that stretch reads IGLRKHQQQHYHQHSHSQM. Over residues 299-308 the composition is skewed to polar residues; that stretch reads VSQSPSPSSK. Positions 388–413 are enriched in low complexity; the sequence is SSLNPPSSSTSNSTTAAITSTSPPAN. The span at 591 to 601 shows a compositional bias: low complexity; sequence NPNTTTNNNNT. The 364-residue stretch at 791–1154 folds into the Protein kinase domain; that stretch reads MKNIKYIGSG…ACNILEMPEC (364 aa). ATP contacts are provided by residues 797-805 and lysine 818; that span reads IGSGAFSIA. The active-site Proton acceptor is the aspartate 929. Mg(2+)-binding residues include asparagine 934 and aspartate 947. Residues 1034–1068 are disordered; that stretch reads HNPNTNSNISGSGSRSGSGSTGGNGSAGDGSTNST. Low complexity predominate over residues 1037-1046; that stretch reads NTNSNISGSG. A compositionally biased stretch (gly residues) spans 1047 to 1061; it reads SRSGSGSTGGNGSAG.

It belongs to the protein kinase superfamily. Ser/Thr protein kinase family. WEE1 subfamily. In terms of processing, phosphorylated.

It is found in the bud neck. The protein resides in the nucleus. It catalyses the reaction L-seryl-[protein] + ATP = O-phospho-L-seryl-[protein] + ADP + H(+). It carries out the reaction L-threonyl-[protein] + ATP = O-phospho-L-threonyl-[protein] + ADP + H(+). Its function is as follows. Protein kinase that acts as a negative regulator of entry into mitosis (G2 to M transition) by phosphorylating and inhibiting the mitosis-promoting cyclin B-bound CDC28 at 'Tyr-18'. SWE1-mediated inhibition of CDC28 acts in a cell size or morphogenesis checkpoint to delay mitosis in response to defects in growth, actin organization or bud formation. Plays an important role in filamentous growth. The polypeptide is Mitosis inhibitor protein kinase SWE1 (SWE1) (Candida albicans (strain SC5314 / ATCC MYA-2876) (Yeast)).